The primary structure comprises 263 residues: Receptor-transporting protein 1 (263 aa).

The Cytoplasmic portion of the chain corresponds to 1–238 (MRIFRPWRLR…QTGSGWNFCS (238 aa)). A 3CxxC-type zinc finger spans residues 88–197 (ASGRFHCSWC…GEFCEACQEG (110 aa)). A helical membrane pass occupies residues 239–259 (IPWCLFWATVLLLIIYLQFSF). The Extracellular segment spans residues 260–263 (RSSV).

This sequence belongs to the TMEM7 family. As to quaternary structure, interacts with olfactory receptors. As to expression, expressed in testis.

The protein resides in the cell membrane. Its function is as follows. Specifically promotes functional cell surface expression of olfactory receptors, but not of other GPCRs. The protein is Receptor-transporting protein 1 (RTP1) of Homo sapiens (Human).